Consider the following 550-residue polypeptide: Kinase suppressor of Ras B (550 aa).

Low complexity-rich tracts occupy residues Ser-21–Ile-56 and Ala-63–Ser-75. Residues Ser-21–Ile-87 are disordered. The Phorbol-ester/DAG-type zinc-finger motif lies at Tyr-90–Cys-145. The segment at Thr-172–Gly-196 is disordered. Residues Ser-177–Ser-193 are compositionally biased toward low complexity. The Protein kinase domain maps to Val-248–Val-528. The interval Met-530 to Phe-550 is disordered.

Belongs to the protein kinase superfamily. TKL Ser/Thr protein kinase family. As to quaternary structure, interacts with ndk-1.

Probable inactive protein kinase which positively regulates Ras-mediated signaling probably acting at the level of let-60/ras or/and lin-45/raf. In the germline, regulates meiotic progression during oogenesis and mpk-1 (isoform b) phosphorylation. Plays a role in meiotic recombination events. Functions redundantly with ksr-1 in the Ras-mediated regulation of larval survival, the development of excretory canal, in determining vulval precursor cell fate during vulval induction and in mpk-1 phosphorylation in somatic cells. The polypeptide is Kinase suppressor of Ras B (Caenorhabditis elegans).